We begin with the raw amino-acid sequence, 529 residues long: Cytochrome P450 monooxygenase ausG (529 aa).

The helical transmembrane segment at 31–51 (FLVTCGLPWLLLLFSVTIILF) threads the bilayer. Cys470 provides a ligand contact to heme.

This sequence belongs to the cytochrome P450 family. Heme serves as cofactor.

It localises to the membrane. It participates in secondary metabolite biosynthesis; terpenoid biosynthesis. In terms of biological role, cytochrome P450 monooxygenase; part of the gene cluster B that mediates the biosynthesis of austinol and dehydroaustinol, two fungal meroterpenoids. The first step of the pathway is the synthesis of 3,5-dimethylorsellinic acid by the polyketide synthase ausA. 3,5-dimethylorsellinic acid is then prenylated by the polyprenyl transferase ausN. Further epoxidation by the FAD-dependent monooxygenase ausM and cyclization by the probable terpene cyclase ausL lead to the formation of protoaustinoid A. Protoaustinoid A is then oxidized to spiro-lactone preaustinoid A3 by the combined action of the FAD-binding monooxygenases ausB and ausC, and the dioxygenase ausE. Acid-catalyzed keto-rearrangement and ring contraction of the tetraketide portion of preaustinoid A3 by ausJ lead to the formation of preaustinoid A4. The aldo-keto reductase ausK, with the help of ausH, is involved in the next step by transforming preaustinoid A4 into isoaustinone which is in turn hydroxylated by the P450 monooxygenase ausI to form austinolide. Finally, the cytochrome P450 monooxygenase ausG modifies austinolide to austinol. Austinol can be further modified to dehydroaustinol which forms a diffusible complex with diorcinol that initiates conidiation. Due to genetic rearrangements of the clusters and the subsequent loss of some enzymes, the end products of the Emericella nidulans austinoid biosynthesis clusters are austinol and dehydroaustinol, even if additional enzymes, such as the O-acetyltransferase ausQ and the cytochrome P450 monooxygenase ausR are still functional. This chain is Cytochrome P450 monooxygenase ausG, found in Emericella nidulans (strain FGSC A4 / ATCC 38163 / CBS 112.46 / NRRL 194 / M139) (Aspergillus nidulans).